The chain runs to 576 residues: Zn(2)-C6 fungal-type transcription factor mpsE (576 aa).

The zn(2)-C6 fungal-type DNA-binding region spans 15-46 (CDRCRSHKLKCPQQPSTATGACQRCTRAKAQC). Over residues 47 to 61 (TFSPRSRAIKNTQDG) the composition is skewed to polar residues. Disordered regions lie at residues 47-123 (TFSP…GTFD), 334-369 (VAHA…SSTA), and 404-424 (HPAP…LHRR). A compositionally biased stretch (low complexity) spans 95 to 109 (PPQQQQSDQQKPSGS).

It is found in the nucleus. In terms of biological role, transcription factor; part of the gene cluster that mediates the biosynthesis of macrophasetins, 3-decalinoyltetramic acids (DTAs) which feature a tetramate (pyrrolidine-2,4-dione) unit connected to a decalin fragment and that have potent bioactivities. This Macrophomina phaseolina (strain MS6) (Charcoal rot fungus) protein is Zn(2)-C6 fungal-type transcription factor mpsE.